The chain runs to 190 residues: Corticoliberin (190 aa).

A signal peptide spans 1 to 24 (MRLRLLVSVGVLLVALLPSPPCRA). Residues 25-147 (LLSRGPIPGA…QEAPAARKRR (123 aa)) constitute a propeptide that is removed on maturation. Disordered stretches follow at residues 33–57 (GARQ…QEPQ) and 116–151 (RRPF…SQEP). Alanine amide is present on alanine 188.

Belongs to the sauvagine/corticotropin-releasing factor/urotensin I family. Interacts (via C-terminus) with CRFR1 (via N-terminal extracellular domain). Produced by the hypothalamus.

It localises to the secreted. Its function is as follows. Hormone regulating the release of corticotropin from pituitary gland. Induces NLRP6 in intestinal epithelial cells, hence may influence gut microbiota profile. The chain is Corticoliberin (CRH) from Bos taurus (Bovine).